A 481-amino-acid chain; its full sequence is Proline--tRNA ligase (481 aa).

Belongs to the class-II aminoacyl-tRNA synthetase family. ProS type 3 subfamily. Homodimer.

It is found in the cytoplasm. It carries out the reaction tRNA(Pro) + L-proline + ATP = L-prolyl-tRNA(Pro) + AMP + diphosphate. In terms of biological role, catalyzes the attachment of proline to tRNA(Pro) in a two-step reaction: proline is first activated by ATP to form Pro-AMP and then transferred to the acceptor end of tRNA(Pro). The chain is Proline--tRNA ligase from Chlorobium chlorochromatii (strain CaD3).